A 115-amino-acid chain; its full sequence is Peptidyl-tRNA hydrolase (115 aa).

Belongs to the PTH2 family.

The protein localises to the cytoplasm. The enzyme catalyses an N-acyl-L-alpha-aminoacyl-tRNA + H2O = an N-acyl-L-amino acid + a tRNA + H(+). Functionally, the natural substrate for this enzyme may be peptidyl-tRNAs which drop off the ribosome during protein synthesis. The chain is Peptidyl-tRNA hydrolase from Methanocaldococcus jannaschii (strain ATCC 43067 / DSM 2661 / JAL-1 / JCM 10045 / NBRC 100440) (Methanococcus jannaschii).